The sequence spans 258 residues: Putative cysteine-rich repeat secretory protein 61 (258 aa).

Residues 1-31 (MSSSFIPKRIALVLNLAMVAIQVFFIRSVSS) form the signal peptide. Gnk2-homologous domains follow at residues 38–140 (YLYH…PTAF) and 146–253 (DKNK…IYPF).

The protein belongs to the cysteine-rich repeat secretory protein family.

The protein localises to the secreted. In Arabidopsis thaliana (Mouse-ear cress), this protein is Putative cysteine-rich repeat secretory protein 61 (CRRSP61).